We begin with the raw amino-acid sequence, 420 residues long: Zinc finger and BTB domain-containing protein 42 (420 aa).

The 69-residue stretch at 24 to 92 (CDCTVLVGDA…MYEGRLDLHN (69 aa)) folds into the BTB domain. 2 disordered regions span residues 127-204 (TRTL…HPPC) and 222-247 (VKAE…PPPV). Low complexity predominate over residues 227–241 (DSFSEQDSSSPQSAD). C2H2-type zinc fingers lie at residues 292 to 314 (CICP…LSAH), 332 to 354 (PTCP…ERTH), 360 to 382 (YTCV…AVVH), and 388 to 411 (HACR…RKFH).

Belongs to the krueppel C2H2-type zinc-finger protein family. ZBTB18 subfamily. As to expression, highly expressed in skeletal muscle and ovary (at protein level). Low expression in brain, lung, spleen, liver and heart (at protein level). Not detected in kidney and intestines (at protein level). Also observed in testis and, at lower levels, in stomach and nervous system.

The protein localises to the cytoplasm. The protein resides in the nucleus. Its subcellular location is the nucleoplasm. Its function is as follows. Transcriptional repressor. Specifically binds DNA and probably acts by recruiting chromatin remodeling multiprotein complexes. This is Zinc finger and BTB domain-containing protein 42 (Zbtb42) from Mus musculus (Mouse).